Consider the following 207-residue polypeptide: Large ribosomal subunit protein bL25 (207 aa).

Residues 186–207 (SKPRGGAGAEGEADAEGEAAAE) are disordered. Acidic residues predominate over residues 196–207 (GEADAEGEAAAE).

It belongs to the bacterial ribosomal protein bL25 family. CTC subfamily. Part of the 50S ribosomal subunit; part of the 5S rRNA/L5/L18/L25 subcomplex. Contacts the 5S rRNA. Binds to the 5S rRNA independently of L5 and L18.

Functionally, this is one of the proteins that binds to the 5S RNA in the ribosome where it forms part of the central protuberance. This Methylobacillus flagellatus (strain ATCC 51484 / DSM 6875 / VKM B-1610 / KT) protein is Large ribosomal subunit protein bL25.